Here is a 188-residue protein sequence, read N- to C-terminus: PRA1 family protein 3 (188 aa).

Met-1 is subject to N-acetylmethionine. The Cytoplasmic segment spans residues 1 to 35 (MDVNIAPLRAWDDFFPGSDRFARPDFRDISKWNNR). The next 2 membrane-spanning stretches (helical) occupy residues 36–56 (VVSN…MMIS) and 57–77 (VVGF…VLVF). Topologically, residues 78 to 93 (TGFVWAAHNKDILRRM) are cytoplasmic. The next 2 helical transmembrane spans lie at 94–114 (KKQY…FLIS) and 115–135 (LFGG…LMFI). Positions 103 to 117 (MVVMLASYFLISLFG) are required for homodimer formation and heterodimer formation with ARL6IP1. Residues 136 to 188 (HASLRLRNLKNKLENKMEEIGLKRTPMGIVLDALEQQEETITKFSDYISKMKE) are Cytoplasmic-facing. The tract at residues 136–188 (HASLRLRNLKNKLENKMEEIGLKRTPMGIVLDALEQQEETITKFSDYISKMKE) is targeting to endoplasmic reticulum membrane.

This sequence belongs to the PRA1 family. As to quaternary structure, homodimer. Heterodimer with ARL6IP1. Forms multimers. Interacts with ARL6. Interacts with prenylated RAB1A and RAB3A. Interacts with SLC1A1/EAAC1. Interacts with RTN2 (via first transmembrane domain). Does not interact with VAMP1, VAMP2 or VAMP3.

It is found in the endoplasmic reticulum membrane. Its subcellular location is the cell membrane. It localises to the cytoplasm. The protein resides in the cytoskeleton. Functionally, regulates intracellular concentrations of taurine and glutamate. Negatively modulates SLC1A1/EAAC1 glutamate transport activity by decreasing its affinity for glutamate in a PKC activity-dependent manner. Plays a role in the retention of SLC1A1/EAAC1 in the endoplasmic reticulum. The chain is PRA1 family protein 3 (ARL6IP5) from Bos taurus (Bovine).